Reading from the N-terminus, the 221-residue chain is Pectate lyase C (221 aa).

The N-terminal stretch at 1–27 (MKKIVSILFMFGLVMGFSQFQPSTVFA) is a signal peptide.

The protein belongs to the polysaccharide lyase 3 family. Ca(2+) serves as cofactor.

Its subcellular location is the secreted. It catalyses the reaction Eliminative cleavage of (1-&gt;4)-alpha-D-galacturonan to give oligosaccharides with 4-deoxy-alpha-D-galact-4-enuronosyl groups at their non-reducing ends.. The catalysed reaction is Eliminative cleavage of (1-&gt;4)-alpha-D-galacturonan methyl ester to give oligosaccharides with 4-deoxy-6-O-methyl-alpha-D-galact-4-enuronosyl groups at their non-reducing ends.. It participates in glycan metabolism; pectin degradation; 2-dehydro-3-deoxy-D-gluconate from pectin: step 2/5. Its function is as follows. Catalyzes the depolymerization of both polygalacturonate and pectins of methyl esterification degree from 22 to 89%, with an endo mode of action. In contrast to the majority of pectate lyases, displays high activity on highly methylated pectins. Is also able to cleave trigalacturonate to galacturonic acid and unsaturated digalacturonate. The polypeptide is Pectate lyase C (pelC) (Bacillus subtilis (strain 168)).